Reading from the N-terminus, the 277-residue chain is Large ribosomal subunit protein uL2 (277 aa).

A disordered region spans residues 222 to 277 (GVTMNPVDHPHGGGEGRTSGGRNPVTPWGFPTKGKKTRNNKATDKFIVSSRHKRKK).

It belongs to the universal ribosomal protein uL2 family. Part of the 50S ribosomal subunit. Forms a bridge to the 30S subunit in the 70S ribosome.

One of the primary rRNA binding proteins. Required for association of the 30S and 50S subunits to form the 70S ribosome, for tRNA binding and peptide bond formation. It has been suggested to have peptidyltransferase activity; this is somewhat controversial. Makes several contacts with the 16S rRNA in the 70S ribosome. This is Large ribosomal subunit protein uL2 from Xanthobacter autotrophicus (strain ATCC BAA-1158 / Py2).